Reading from the N-terminus, the 625-residue chain is tRNA uridine 5-carboxymethylaminomethyl modification enzyme MnmG (625 aa).

FAD is bound by residues 13-18 (GGGHAG), Val-125, and Ser-182. 276–290 (GPRYCPSIEDKITRF) is a binding site for NAD(+). Gln-373 contributes to the FAD binding site.

It belongs to the MnmG family. In terms of assembly, homodimer. Heterotetramer of two MnmE and two MnmG subunits. It depends on FAD as a cofactor.

The protein localises to the cytoplasm. Its function is as follows. NAD-binding protein involved in the addition of a carboxymethylaminomethyl (cmnm) group at the wobble position (U34) of certain tRNAs, forming tRNA-cmnm(5)s(2)U34. This is tRNA uridine 5-carboxymethylaminomethyl modification enzyme MnmG from Lactococcus lactis subsp. cremoris (strain SK11).